Consider the following 509-residue polypeptide: Pituitary homeobox homolog Ptx1 (509 aa).

Residues 70–98 are compositionally biased toward low complexity; sequence NGAGSAGSAESATTTSTALSSGSTGSSTV. 3 disordered regions span residues 70-125, 148-171, and 204-273; these read NGAG…SSVS, QDLV…PKHE, and LNNF…HFTS. The span at 227–242 shows a compositional bias: polar residues; that stretch reads RSVNETTIKTENISSS. Residues 243-258 are compositionally biased toward basic and acidic residues; the sequence is GHDEPMTTSGEEPKND. Residues 259-269 are compositionally biased toward basic residues; it reads KKNKRQRRQRT. A DNA-binding region (homeobox) is located at residues 262-322; that stretch reads KRQRRQRTHF…KNRRAKWRKR (61 aa). An OAR motif is present at residues 460–473; the sequence is SSIATLRLKAKQHA. A Nuclear localization signal motif is present at residues 464 to 470; sequence TLRLKAK.

This sequence belongs to the paired homeobox family. Bicoid subfamily.

It localises to the nucleus. In terms of biological role, appears to control physiological cell functions rather than pattern formation during embryogenesis. The polypeptide is Pituitary homeobox homolog Ptx1 (Ptx1) (Drosophila melanogaster (Fruit fly)).